We begin with the raw amino-acid sequence, 965 residues long: Phosphatidylethanolamine N-methyltransferase (965 aa).

The Lumenal segment spans residues 1–82; it reads MDRGLSTGTN…SPSEPKNLSD (82 aa). Residues 34-54 are disordered; sequence PTVTNASNGKDKAGKTFGRTP. The helical transmembrane segment at 83–103 threads the bilayer; sequence LVVLTILAGHIFLLWILPSGA. The Cytoplasmic portion of the chain corresponds to 104 to 106; sequence KIP. Residues 107–127 traverse the membrane as a helical segment; sequence VFAVIYLFWRSCYNAGIGWLL. At 128 to 192 the chain is on the lumenal side; the sequence is HNQSHHKTLV…EYNTWLVFRR (65 aa). A helical membrane pass occupies residues 193–213; it reads LVDLILMCDFASYCLFAIACS. The Cytoplasmic segment spans residues 214-220; the sequence is RHPANES. A helical transmembrane segment spans residues 221–241; the sequence is VLMTVIRWTSGIALVLFNLWV. Residues 242-274 lie on the Lumenal side of the membrane; it reads KLDAHRVVKDYAWYWGDFFYLIDQELTFDGVFE. A helical membrane pass occupies residues 275–295; the sequence is MAPHPMYSVGYAGYYGISLMA. Over 296–297 the chain is Cytoplasmic; sequence AS. The helical transmembrane segment at 298-318 threads the bilayer; sequence YKVLFISIIAHAAQFAFLVLV. Topologically, residues 319-394 are lumenal; that stretch reads ENPHIDKTYN…LDLHRITDTS (76 aa). The interval 326–368 is disordered; it reads TYNPPPPRKRTITEHDAASQRSQSPDTPNAPSVSEENVPNATT. Residues 344 to 368 are compositionally biased toward polar residues; it reads SQRSQSPDTPNAPSVSEENVPNATT. Residues 395 to 415 form a helical membrane-spanning segment; sequence SILVQFLMFSLTVLTPSTPWY. Position 416 (glutamine 416) is a topological domain, cytoplasmic. A helical transmembrane segment spans residues 417–437; that stretch reads FLFVANAAIWRLWYSVGIGYL. Residues 438–470 lie on the Lumenal side of the membrane; the sequence is LNRQSNCKSWTRHFVKYGETPHEAWNQWKGTYH. The chain crosses the membrane as a helical span at residues 471–491; that stretch reads LSMVMCYASFISAVWKMYTLP. Topologically, residues 492–503 are cytoplasmic; it reads SNWGYGLAILRH. Residues 504–524 form a helical membrane-spanning segment; sequence VLGAGLISLQIWTSVSIYESL. At 525 to 559 the chain is on the lumenal side; the sequence is GEFGWFYGDFFFDESPKLTYNGIYRFLNNPERVLG. A helical transmembrane segment spans residues 560 to 580; that stretch reads LAGVWGAVLITASGTVAFLAF. Residues 581-965 are Cytoplasmic-facing; sequence LSHILSLGFI…GATTPTESKE (385 aa).

It belongs to the class VI-like SAM-binding methyltransferase superfamily. CHO2 family.

The protein localises to the endoplasmic reticulum membrane. It carries out the reaction a 1,2-diacyl-sn-glycero-3-phosphoethanolamine + S-adenosyl-L-methionine = a 1,2-diacyl-sn-glycero-3-phospho-N-methylethanolamine + S-adenosyl-L-homocysteine + H(+). Its pathway is phospholipid metabolism; phosphatidylcholine biosynthesis. Functionally, catalyzes the first step of the methylation pathway of phosphatidylcholine biosynthesis, the SAM-dependent methylation of phosphatidylethanolamine (PE) to phosphatidylmonomethylethanolamine (PMME). This is Phosphatidylethanolamine N-methyltransferase from Emericella nidulans (strain FGSC A4 / ATCC 38163 / CBS 112.46 / NRRL 194 / M139) (Aspergillus nidulans).